The chain runs to 209 residues: Large ribosomal subunit protein uL3 (209 aa).

The residue at position 150 (Q150) is an N5-methylglutamine.

Belongs to the universal ribosomal protein uL3 family. Part of the 50S ribosomal subunit. Forms a cluster with proteins L14 and L19. In terms of processing, methylated by PrmB.

One of the primary rRNA binding proteins, it binds directly near the 3'-end of the 23S rRNA, where it nucleates assembly of the 50S subunit. In Vibrio cholerae serotype O1 (strain ATCC 39541 / Classical Ogawa 395 / O395), this protein is Large ribosomal subunit protein uL3.